Reading from the N-terminus, the 485-residue chain is Cysteine--tRNA ligase (485 aa).

Cysteine 27 is a Zn(2+) binding site. The 'HIGH' region signature appears at 29 to 39 (ITAYDLCHIGH). Zn(2+)-binding residues include cysteine 208, histidine 233, and glutamate 237. The 'KMSKS' region signature appears at 265–269 (KMSKS). Lysine 268 is a binding site for ATP.

This sequence belongs to the class-I aminoacyl-tRNA synthetase family. As to quaternary structure, monomer. Requires Zn(2+) as cofactor.

The protein localises to the cytoplasm. The catalysed reaction is tRNA(Cys) + L-cysteine + ATP = L-cysteinyl-tRNA(Cys) + AMP + diphosphate. The protein is Cysteine--tRNA ligase of Nitratidesulfovibrio vulgaris (strain ATCC 29579 / DSM 644 / CCUG 34227 / NCIMB 8303 / VKM B-1760 / Hildenborough) (Desulfovibrio vulgaris).